The chain runs to 94 residues: Integration host factor subunit beta (94 aa).

The protein belongs to the bacterial histone-like protein family. As to quaternary structure, heterodimer of an alpha and a beta chain.

In terms of biological role, this protein is one of the two subunits of integration host factor, a specific DNA-binding protein that functions in genetic recombination as well as in transcriptional and translational control. This chain is Integration host factor subunit beta, found in Escherichia coli O127:H6 (strain E2348/69 / EPEC).